A 469-amino-acid polypeptide reads, in one-letter code: MEFSSHHIRLLQQLDEQRRRDLFCDCHIIVEGQMFKAHRNVLFASSGYFKMLLSQSCRDMGEPITATFDVFSADTFTAILDFVYSGKLPLSGQNVIEVMSAASYLQMTDVIGVCKMFIKSSLDINEKDRDGFFSLSDKDTDSNGSGLYAAGWRTESSPTHTHKTTEHGSFIAGYNYPPPISSRLQHPFSKSPRKPELVRKHRRRLLPEALTPALSHIPLGDLVGGSTECMLHDEETVESVSQEEERTQTQVSIISIKVEDLDATSNSWPESPPQESLDQGSALHITKAEELYKAMPTILGGVSGWGEDELSSGRFKCPFCTHTVKRKADLKRHLRCHTGERPYPCEACGKRFTRLEHLRNHFQTIHEAGKLICRRCKLPVTKVTGRVIQDGTRRYRLCQACLAEAGLDNVNFDYGEDQPLVLPPENEREHCWNFKEEGRQENGSEAAESDLVIQEVVDSEEDELKQKQD.

Residues 24 to 92 enclose the BTB domain; the sequence is CDCHIIVEGQ…VYSGKLPLSG (69 aa). 2 C2H2-type zinc fingers span residues 315–337 and 343–366; these read FKCP…LRCH and YPCE…QTIH.

It is found in the nucleus. Functionally, may be involved in transcriptional regulation. The sequence is that of Zinc finger and BTB domain-containing protein 8A.1-B (zbtb8a.1-b) from Xenopus laevis (African clawed frog).